The following is a 258-amino-acid chain: L-aspartate dehydrogenase 1 (258 aa).

2 residues coordinate NAD(+): Ala-121 and Asn-181. His-211 is a catalytic residue.

The protein belongs to the L-aspartate dehydrogenase family.

It catalyses the reaction L-aspartate + NADP(+) + H2O = oxaloacetate + NH4(+) + NADPH + H(+). The catalysed reaction is L-aspartate + NAD(+) + H2O = oxaloacetate + NH4(+) + NADH + H(+). It functions in the pathway cofactor biosynthesis; NAD(+) biosynthesis; iminoaspartate from L-aspartate (dehydrogenase route): step 1/1. In terms of biological role, specifically catalyzes the NAD or NADP-dependent dehydrogenation of L-aspartate to iminoaspartate. The sequence is that of L-aspartate dehydrogenase 1 from Bordetella pertussis (strain Tohama I / ATCC BAA-589 / NCTC 13251).